Here is a 250-residue protein sequence, read N- to C-terminus: AA9 family lytic polysaccharide monooxygenase F (250 aa).

The first 18 residues, 1-18, serve as a signal peptide directing secretion; sequence MHLKTFSNLLVFVATVAA. Residue His-19 participates in Cu(2+) binding. 2 N-linked (GlcNAc...) asparagine glycosylation sites follow: Asn-24 and Asn-85. Cystine bridges form between Cys-70–Cys-199 and Cys-169–Cys-250. Position 108 (His-108) interacts with Cu(2+). Asn-146 is a glycosylation site (N-linked (GlcNAc...) asparagine). Residues His-185 and Gln-194 each contribute to the O2 site. A Cu(2+)-binding site is contributed by Tyr-196.

The protein belongs to the polysaccharide monooxygenase AA9 family. Cu(2+) is required as a cofactor.

It localises to the secreted. It catalyses the reaction [(1-&gt;4)-beta-D-glucosyl]n+m + reduced acceptor + O2 = 4-dehydro-beta-D-glucosyl-[(1-&gt;4)-beta-D-glucosyl]n-1 + [(1-&gt;4)-beta-D-glucosyl]m + acceptor + H2O.. Functionally, lytic polysaccharide monooxygenase (LPMO) that depolymerizes crystalline and amorphous polysaccharides via the oxidation of scissile alpha- or beta-(1-4)-glycosidic bonds, yielding C1 and C4 oxidation products. Catalysis by LPMOs requires the reduction of the active-site copper from Cu(II) to Cu(I) by a reducing agent and H(2)O(2) or O(2) as a cosubstrate. The polypeptide is AA9 family lytic polysaccharide monooxygenase F (Botryotinia fuckeliana (strain B05.10) (Noble rot fungus)).